Here is a 938-residue protein sequence, read N- to C-terminus: MSVVQSSCAYCGVGCGVSVSSNKPNWTDVDAADLILVGDNKHPANYGHLCAKGERLLDSLAQPNVLRYPKLRSGMPLDWDKASTLIADTFAKTIAEHGPDSVALYLSGQLLTEDYYVANKFAKGFLKTANVDTNSRLCMSSAVSAMQRAFGEDVVPGCYDDLEQADVIVLVGANTAWTHPVLFQRILAAIKANNAQLVVIDPLSTATAKQADLHLAIKPGADLTLFHGLLGYLADQNRVDHAYIAAHTEGFDTVVLQAQQLSANLADLATQVGVSVTQLTQFYQLVANNKKVLTASCQGVNQSTIGTDATNAMINCHLALGHIGQAGCGFFSLTGQPNAMGGREVGGLATQLACHMGFSQPEQQLLADFWKVDSIADQKGLVAVEMFDALAEGKIKAIWIMGTNPVVSLPNSEKIAQALADCPFVVVSEISPDSDTAKLADVLLPAQGWSEKCGTVTNSERTITRQRGFITAKGQAKPDWWAVSQVAKKMGFDGFEFDDNASIFSEFAALSAKVKQVFPTKVFDLTGLTELSKAQYDALAPTQWPIASATQIGQQNVRVFGLGEFATATGKAQFVTPAVVSVPQQSLPSNTLLLNTGRSRDQWHTMTRTGHIASLRASIPEPVVHLHSSQLSALSLTEGGLVRIEAIQNQIEQYSTETANPDLFTHASFTMARAVVDDDIPTNMALMSMHWSAQFSLTKGVNQALDARVDPISKQPGFKCQPVTLTPVELALQGVVFGQHYSSAHGLCWQVAQTLENGVCHHIGFTDTDDGFAYQATVHSLKWTLTVVGQPLYIQCNMDKGLLKALKVLSHTQVNVALYQMNDFIGKPVDKQLIKQLHQQIKAGNSPLICACTGVTEANINDEINQQFNDQVMSDGLANISFEQALDSTQLLLGCGRQCGSCHSEVKQCAKQSWKDALSYCESYSDIDHQPSVAEDVA.

Positions 1–64 (MSVVQSSCAY…RLLDSLAQPN (64 aa)) constitute a 4Fe-4S Mo/W bis-MGD-type domain. [4Fe-4S] cluster-binding residues include Cys-8, Cys-11, Cys-15, and Cys-50.

It belongs to the prokaryotic molybdopterin-containing oxidoreductase family. NasA/NapA/NarB subfamily. The cofactor is [4Fe-4S] cluster. It depends on Mo-bis(molybdopterin guanine dinucleotide) as a cofactor.

It is found in the cytoplasm. The enzyme catalyses nitrate + a quinol = a quinone + nitrite + H2O. Its pathway is nitrogen metabolism; nitrate reduction (assimilation). Functionally, nitrate reductase is a key enzyme involved in the first step of nitrate assimilation in plants, fungi and bacteria. This Shewanella frigidimarina (strain NCIMB 400) protein is Nitrate reductase.